The chain runs to 747 residues: Heterogeneous nuclear ribonucleoprotein U-like protein 2 (747 aa).

Residues 3 to 37 enclose the SAP domain; sequence VKRLKVTELRSELQRRGLDSRGLKVDLAQRLQEAL. Disordered regions lie at residues 40–242 and 627–666; these read EMLE…EEED and EEARKLLPPSEKRTNRRNNRNKRNRQNRSRGQGYVGGQRR. Acidic residues predominate over residues 73–97; it reads GDEEEDEEEEEEDEEALLEDEDEEP. The segment covering 115–125 has biased composition (low complexity); it reads EAAAMEAAAEP. A compositionally biased stretch (gly residues) spans 137–147; it reads GSGGVNGGEEQ. Residues 148 to 163 are compositionally biased toward basic and acidic residues; sequence GLGKREEDEPEERSGD. Ser-161 is modified (phosphoserine). Thr-165 carries the post-translational modification Phosphothreonine. 5 positions are modified to phosphoserine: Ser-168, Ser-185, Ser-188, Ser-226, and Ser-228. Positions 185 to 223 are enriched in basic and acidic residues; sequence SEKSKPAGSDGERRGVKRQRDEKDEHGRAYYEFREEAYH. Positions 226-419 constitute a B30.2/SPRY domain; that stretch reads SKSPLPPEEE…VELNFGQKEE (194 aa). The span at 232–242 shows a compositional bias: acidic residues; it reads PEEEAKDEEED. Basic and acidic residues predominate over residues 627–639; the sequence is EEARKLLPPSEKR. A compositionally biased stretch (basic residues) spans 640–654; the sequence is TNRRNNRNKRNRQNR. Omega-N-methylarginine is present on residues Arg-656, Arg-684, Arg-738, and Arg-747.

Binds to MLF1 and retains it in the nucleus.

Its subcellular location is the nucleus. In Homo sapiens (Human), this protein is Heterogeneous nuclear ribonucleoprotein U-like protein 2 (HNRNPUL2).